A 274-amino-acid chain; its full sequence is Thiamine kinase (274 aa).

Belongs to the thiamine kinase family.

It catalyses the reaction thiamine + ATP = thiamine phosphate + ADP + H(+). It participates in cofactor biosynthesis; thiamine diphosphate biosynthesis; thiamine phosphate from thiamine: step 1/1. In terms of biological role, catalyzes the ATP-dependent phosphorylation of thiamine to thiamine phosphate. Is involved in thiamine salvage. The chain is Thiamine kinase from Salmonella paratyphi A (strain ATCC 9150 / SARB42).